A 682-amino-acid polypeptide reads, in one-letter code: L-type lectin-domain containing receptor kinase VI.2 (682 aa).

Residues 1-26 (MGTQRSMFIVSFLFKLFLFLSVHVRA) form the signal peptide. Over 27-310 (QRTTTNFAFR…AKKEGLNSQV (284 aa)) the chain is Extracellular. The segment at 29-277 (TTTNFAFRGF…AHYVMGWSFS (249 aa)) is legume-lectin like. The chain crosses the membrane as a helical span at residues 311–331 (IVMIVALSAVMLVMLVLLFFF). Topologically, residues 332-682 (VMYKKRLGQE…RVSSTSRISQ (351 aa)) are cytoplasmic. The Protein kinase domain maps to 367–641 (FKKTGIIGTG…LRYLNGEENV (275 aa)). Residues 373–381 (IGTGGFGTV) and Lys-395 contribute to the ATP site. Asp-494 (proton acceptor) is an active-site residue.

The protein in the C-terminal section; belongs to the protein kinase superfamily. Ser/Thr protein kinase family. It in the N-terminal section; belongs to the leguminous lectin family. As to expression, strongly expressed in the vascular system and trichomes of the leaves. Also expressed in guard cells, anthers, stigmas and germinating seeds, but not found in petals or roots. Increased susceptibility to the bacteria Pseudomonas syringae, characterized by stronger necrotic symptoms and higher bacterial proliferation.

It localises to the cell membrane. It catalyses the reaction L-seryl-[protein] + ATP = O-phospho-L-seryl-[protein] + ADP + H(+). The enzyme catalyses L-threonyl-[protein] + ATP = O-phospho-L-threonyl-[protein] + ADP + H(+). Its function is as follows. Involved in negative regulation of abscisic acid response in seed germination. In terms of biological role, involved in resistance response to the pathogenic bacteria Pseudomonas syringae. The protein is L-type lectin-domain containing receptor kinase VI.2 of Arabidopsis thaliana (Mouse-ear cress).